A 459-amino-acid chain; its full sequence is Zeatin O-glucosyltransferase (459 aa).

H26 acts as the Proton acceptor in catalysis. H26 is a binding site for an anthocyanidin. D125 serves as the catalytic Charge relay. S148, A335, Q337, H352, W355, N356, S357, E360, D376, and Q377 together coordinate UDP-alpha-D-glucose.

The protein belongs to the UDP-glycosyltransferase family.

It carries out the reaction trans-zeatin + UDP-alpha-D-glucose = O-beta-D-glucosyl-trans-zeatin + UDP + H(+). Functionally, may regulate active versus storage forms of cytokinins, and could have an impact on seed growth. Can also use UDP-xylose to catalyze the formation of O-xylosylzeatin but at much lower affinity. This chain is Zeatin O-glucosyltransferase, found in Phaseolus lunatus (Lima bean).